Here is a 122-residue protein sequence, read N- to C-terminus: Large ribosomal subunit protein uL14 (122 aa).

This sequence belongs to the universal ribosomal protein uL14 family. In terms of assembly, part of the 50S ribosomal subunit. Forms a cluster with proteins L3 and L19. In the 70S ribosome, L14 and L19 interact and together make contacts with the 16S rRNA in bridges B5 and B8.

In terms of biological role, binds to 23S rRNA. Forms part of two intersubunit bridges in the 70S ribosome. This chain is Large ribosomal subunit protein uL14, found in Agrobacterium fabrum (strain C58 / ATCC 33970) (Agrobacterium tumefaciens (strain C58)).